The chain runs to 189 residues: Large ribosomal subunit protein bL9 (189 aa).

The protein belongs to the bacterial ribosomal protein bL9 family.

Its function is as follows. Binds to the 23S rRNA. The polypeptide is Large ribosomal subunit protein bL9 (Cereibacter sphaeroides (strain ATCC 17025 / ATH 2.4.3) (Rhodobacter sphaeroides)).